Here is a 78-residue protein sequence, read N- to C-terminus: Large ribosomal subunit protein bL28 (78 aa).

Residues 1-20 (MSRVCQVTGKRPVTGNNRSH) form a disordered region.

It belongs to the bacterial ribosomal protein bL28 family.

In Photobacterium profundum (strain SS9), this protein is Large ribosomal subunit protein bL28.